The sequence spans 384 residues: 8-amino-7-oxononanoate synthase (384 aa).

Residue Arg-21 participates in substrate binding. 108–109 (GF) provides a ligand contact to pyridoxal 5'-phosphate. His-133 provides a ligand contact to substrate. The pyridoxal 5'-phosphate site is built by Ser-179, His-207, and Thr-233. Lys-236 carries the post-translational modification N6-(pyridoxal phosphate)lysine. Thr-352 is a binding site for substrate.

This sequence belongs to the class-II pyridoxal-phosphate-dependent aminotransferase family. BioF subfamily. As to quaternary structure, homodimer. Pyridoxal 5'-phosphate serves as cofactor.

It carries out the reaction 6-carboxyhexanoyl-[ACP] + L-alanine + H(+) = (8S)-8-amino-7-oxononanoate + holo-[ACP] + CO2. Its pathway is cofactor biosynthesis; biotin biosynthesis. In terms of biological role, catalyzes the decarboxylative condensation of pimeloyl-[acyl-carrier protein] and L-alanine to produce 8-amino-7-oxononanoate (AON), [acyl-carrier protein], and carbon dioxide. The polypeptide is 8-amino-7-oxononanoate synthase (Escherichia coli O8 (strain IAI1)).